Reading from the N-terminus, the 151-residue chain is UPF0178 protein Sde_3033 (151 aa).

Belongs to the UPF0178 family.

This Saccharophagus degradans (strain 2-40 / ATCC 43961 / DSM 17024) protein is UPF0178 protein Sde_3033.